We begin with the raw amino-acid sequence, 856 residues long: Glucans biosynthesis glucosyltransferase H (856 aa).

6 consecutive transmembrane segments (helical) span residues 144–164 (ILLV…KGIM), 198–218 (ILIM…TALM), 517–537 (VFLT…FLVL), 574–594 (LFST…ILIW), 608–628 (TLSM…RMIF), and 691–711 (IVGS…VGLG).

It belongs to the glycosyltransferase 2 family. OpgH subfamily.

The protein localises to the cell inner membrane. The protein operates within glycan metabolism; osmoregulated periplasmic glucan (OPG) biosynthesis. Functionally, involved in the biosynthesis of osmoregulated periplasmic glucans (OPGs). This is Glucans biosynthesis glucosyltransferase H from Pseudomonas fluorescens (strain Pf0-1).